A 182-amino-acid polypeptide reads, in one-letter code: Photosystem I assembly protein Ycf4 (182 aa).

The next 2 membrane-spanning stretches (helical) occupy residues 22-42 and 63-83; these read WSSVIFLGASGFLLTGLSSYL and VMCFYGILGLIFSVYLGLTIF.

Belongs to the Ycf4 family.

The protein resides in the plastid. It localises to the chloroplast thylakoid membrane. Seems to be required for the assembly of the photosystem I complex. This chain is Photosystem I assembly protein Ycf4, found in Oltmannsiellopsis viridis (Marine flagellate).